A 371-amino-acid chain; its full sequence is Chaperone protein DnaJ (371 aa).

The J domain maps to 6-71; that stretch reads DYYEILGVEK…QKRAQYDRFG (66 aa). The segment at 104 to 123 is disordered; that stretch reads GGMGGQQRQRRNRNEPRRGS. The CR-type zinc finger occupies 139 to 217; it reads GIEKEIEFDT…CKGKGRVAEH (79 aa). The Zn(2+) site is built by Cys152, Cys155, Cys169, Cys172, Cys191, Cys194, Cys205, and Cys208. CXXCXGXG motif repeat units follow at residues 152–159, 169–176, 191–198, and 205–212; these read CDECKGTG, CGTCGGSG, CPTCHGQG, and CKPCKGKG.

This sequence belongs to the DnaJ family. In terms of assembly, homodimer. It depends on Zn(2+) as a cofactor.

It localises to the cytoplasm. In terms of biological role, participates actively in the response to hyperosmotic and heat shock by preventing the aggregation of stress-denatured proteins and by disaggregating proteins, also in an autonomous, DnaK-independent fashion. Unfolded proteins bind initially to DnaJ; upon interaction with the DnaJ-bound protein, DnaK hydrolyzes its bound ATP, resulting in the formation of a stable complex. GrpE releases ADP from DnaK; ATP binding to DnaK triggers the release of the substrate protein, thus completing the reaction cycle. Several rounds of ATP-dependent interactions between DnaJ, DnaK and GrpE are required for fully efficient folding. Also involved, together with DnaK and GrpE, in the DNA replication of plasmids through activation of initiation proteins. The chain is Chaperone protein DnaJ from Bdellovibrio bacteriovorus (strain ATCC 15356 / DSM 50701 / NCIMB 9529 / HD100).